A 215-amino-acid chain; its full sequence is 3-demethoxyubiquinol 3-hydroxylase (215 aa).

Residues Glu-64, Glu-94, His-97, Glu-146, Glu-178, and His-181 each contribute to the Fe cation site.

Belongs to the COQ7 family. It depends on Fe cation as a cofactor.

It localises to the cell membrane. It carries out the reaction a 5-methoxy-2-methyl-3-(all-trans-polyprenyl)benzene-1,4-diol + AH2 + O2 = a 3-demethylubiquinol + A + H2O. It functions in the pathway cofactor biosynthesis; ubiquinone biosynthesis. In terms of biological role, catalyzes the hydroxylation of 2-nonaprenyl-3-methyl-6-methoxy-1,4-benzoquinol during ubiquinone biosynthesis. The sequence is that of 3-demethoxyubiquinol 3-hydroxylase from Pseudomonas putida (strain W619).